Here is a 100-residue protein sequence, read N- to C-terminus: Integration host factor subunit alpha 2 (100 aa).

The protein belongs to the bacterial histone-like protein family. Heterodimer of an alpha and a beta chain.

Its function is as follows. This protein is one of the two subunits of integration host factor, a specific DNA-binding protein that functions in genetic recombination as well as in transcriptional and translational control. The polypeptide is Integration host factor subunit alpha 2 (Dechloromonas aromatica (strain RCB)).